The primary structure comprises 230 residues: uncharacterized protein (230 aa).

A run of 7 helical transmembrane segments spans residues 34 to 54, 56 to 76, 87 to 107, 111 to 131, 146 to 166, 167 to 187, and 205 to 225; these read FFAG…MNFQ, VVQY…GLMF, MLFA…GMVI, GLGA…LMSV, MLFI…FLGS, PMFQ…YIAY, and VSLY…IGIF.

It belongs to the BI1 family.

It localises to the cell membrane. This is an uncharacterized protein from Helicobacter pylori (strain ATCC 700392 / 26695) (Campylobacter pylori).